The primary structure comprises 298 residues: Bifunctional methyltransferase/endonuclease (298 aa).

Residues 1-79 (MQSIDLYSYL…SLGIDEKIRR (79 aa)) form a probable methylated-DNA--protein-cysteine methyltransferase region. Cys-56 is an active-site residue. The tract at residues 80-298 (LRNDGIEINN…TVALRRNNII (219 aa)) is endonuclease V. Mg(2+) is bound by residues Asp-137 and Asp-197.

It in the N-terminal section; belongs to the MGMT family. This sequence in the C-terminal section; belongs to the endonuclease V family. Requires Mg(2+) as cofactor.

It is found in the cytoplasm. It carries out the reaction Endonucleolytic cleavage at apurinic or apyrimidinic sites to products with a 5'-phosphate.. Functionally, DNA repair enzyme involved in the repair of deaminated bases. Selectively cleaves double-stranded DNA at the second phosphodiester bond 3' to a deoxyinosine leaving behind the intact lesion on the nicked DNA. This chain is Bifunctional methyltransferase/endonuclease, found in Picrophilus torridus (strain ATCC 700027 / DSM 9790 / JCM 10055 / NBRC 100828 / KAW 2/3).